A 180-amino-acid chain; its full sequence is MEAARRPRLGLSRRRPRPAGGPSGGRPWFLLGGDERERLWAELLRTVSPELILDHEVPSLPAFPGQEPRCGPEPTEVFTVGPKTFSWTPFPPDLWGPGRSYRLLHGAGGHLESPARSLPQRPAPDPCRAPRVEQQPSVEGAAALRSCPMCQKEFAPRLTQLDVDSHLAQCLAESTEDVTW.

Residues M1 to R17 are compositionally biased toward basic residues. 2 disordered regions span residues M1–W28 and G106–Q135. Phosphoserine is present on residues S113 and S137. The UBZ2-type zinc-finger motif lies at L144 to W180. 4 residues coordinate Zn(2+): C147, C150, H166, and C170.

Component of the Fanconi anemia (FA) complex. Interacts with FANCA; interaction is direct. Interacts with REV1. Reported to bind monoubiquitinated REV1; however it binds better to non-ubiquitinated REV1.

Its subcellular location is the nucleus. It is found in the chromosome. Functionally, component of the Fanconi anemia (FA) complex required to recruit the FA complex to DNA interstrand cross-links (ICLs) and promote ICLs repair. Following DNA damage recognizes and binds 'Lys-63'-linked ubiquitin generated by RNF8 at ICLs and recruits other components of the FA complex. Promotes translesion synthesis via interaction with REV1. In Homo sapiens (Human), this protein is Fanconi anemia core complex-associated protein 20.